The primary structure comprises 771 residues: 5-methyltetrahydropteroyltriglutamate--homocysteine methyltransferase (771 aa).

5-methyltetrahydropteroyltri-L-glutamate contacts are provided by residues arginine 13–lysine 16 and lysine 128. L-homocysteine is bound by residues isoleucine 451–serine 453 and glutamate 504. L-methionine-binding positions include isoleucine 451–serine 453 and glutamate 504. Residues arginine 535–cysteine 536 and tryptophan 581 each bind 5-methyltetrahydropteroyltri-L-glutamate. Residue aspartate 619 participates in L-homocysteine binding. Aspartate 619 is an L-methionine binding site. Glutamate 625 lines the 5-methyltetrahydropteroyltri-L-glutamate pocket. Zn(2+) contacts are provided by histidine 661, cysteine 663, and glutamate 685. The active-site Proton donor is histidine 714. A Zn(2+)-binding site is contributed by cysteine 746.

This sequence belongs to the vitamin-B12 independent methionine synthase family. Zn(2+) is required as a cofactor.

It catalyses the reaction 5-methyltetrahydropteroyltri-L-glutamate + L-homocysteine = tetrahydropteroyltri-L-glutamate + L-methionine. It participates in amino-acid biosynthesis; L-methionine biosynthesis via de novo pathway; L-methionine from L-homocysteine (MetE route): step 1/1. Catalyzes the transfer of a methyl group from 5-methyltetrahydrofolate to homocysteine resulting in methionine formation. In Nitrobacter winogradskyi (strain ATCC 25391 / DSM 10237 / CIP 104748 / NCIMB 11846 / Nb-255), this protein is 5-methyltetrahydropteroyltriglutamate--homocysteine methyltransferase.